A 118-amino-acid chain; its full sequence is Large ribosomal subunit protein uL18 (118 aa).

The protein belongs to the universal ribosomal protein uL18 family. In terms of assembly, part of the 50S ribosomal subunit; part of the 5S rRNA/L5/L18/L25 subcomplex. Contacts the 5S and 23S rRNAs.

This is one of the proteins that bind and probably mediate the attachment of the 5S RNA into the large ribosomal subunit, where it forms part of the central protuberance. This Helicobacter hepaticus (strain ATCC 51449 / 3B1) protein is Large ribosomal subunit protein uL18.